Reading from the N-terminus, the 33-residue chain is Imperacalcin (33 aa).

3 cysteine pairs are disulfide-bonded: C3–C17, C10–C21, and C16–C32. Important for stimulation of [3H]ryanodine binding to RYR1 regions lie at residues 8–9 and 19–20; these read KR and KK. The segment at 22–24 is essential for stimulation of [3H]ryanodine binding to RYR1; it reads KRR. Positions 25–27 are important for stimulation of [3H]ryanodine binding to RYR1; that stretch reads GTN.

The protein belongs to the scorpion calcin family. As to expression, expressed by the venom gland.

Its subcellular location is the secreted. Functionally, this toxin affects the activity of ryanodine receptors 1, 2 and 3 (RyR1, RyR2 and RyR3). At lower concentrations the toxin increases full openings of the RyRs, and at higher concentrations it inhibits full openings and induces openings to subconductance levels (30% of the full conductance state) and reduces the number of full conductance openings. The different actions may be attributed to the toxins binding at different sites on the RyRs, with binding at a high-affinity site mediating the increase in full openings and the induction of subconductance states evoked upon binding to a lower-affinity site. Furthermore, it triggers calcium release from sarcoplasmic vesicles (11.7 nM are enough to induce a sharp release, and 70% of the total calcium is released after toxin (100 nM) addition) probably by acting as a cell-penetrating peptide (CPP). In addition, it has been shown to dose-dependently stimulate ryanodine binding to RyR1 (EC(50)=8.7 nM). It also augments the bell-shaped calcium-[3H]ryanodine binding curve that is maximal at about 10 uM calcium concentration. It binds a different site as ryanodine. It acts synergistically with caffeine. In vivo, intracerebroventricular injection into mice induces neurotoxic symptoms, followed by death. This chain is Imperacalcin, found in Pandinus imperator (Emperor scorpion).